The chain runs to 490 residues: Aspartyl/glutamyl-tRNA(Asn/Gln) amidotransferase subunit B (490 aa).

Belongs to the GatB/GatE family. GatB subfamily. As to quaternary structure, heterotrimer of A, B and C subunits.

It carries out the reaction L-glutamyl-tRNA(Gln) + L-glutamine + ATP + H2O = L-glutaminyl-tRNA(Gln) + L-glutamate + ADP + phosphate + H(+). It catalyses the reaction L-aspartyl-tRNA(Asn) + L-glutamine + ATP + H2O = L-asparaginyl-tRNA(Asn) + L-glutamate + ADP + phosphate + 2 H(+). Functionally, allows the formation of correctly charged Asn-tRNA(Asn) or Gln-tRNA(Gln) through the transamidation of misacylated Asp-tRNA(Asn) or Glu-tRNA(Gln) in organisms which lack either or both of asparaginyl-tRNA or glutaminyl-tRNA synthetases. The reaction takes place in the presence of glutamine and ATP through an activated phospho-Asp-tRNA(Asn) or phospho-Glu-tRNA(Gln). This Prochlorococcus marinus (strain AS9601) protein is Aspartyl/glutamyl-tRNA(Asn/Gln) amidotransferase subunit B.